Reading from the N-terminus, the 122-residue chain is Large ribosomal subunit protein uL14 (122 aa).

Belongs to the universal ribosomal protein uL14 family. As to quaternary structure, part of the 50S ribosomal subunit. Forms a cluster with proteins L3 and L19. In the 70S ribosome, L14 and L19 interact and together make contacts with the 16S rRNA in bridges B5 and B8.

Its function is as follows. Binds to 23S rRNA. Forms part of two intersubunit bridges in the 70S ribosome. This Mycoplasmopsis pulmonis (strain UAB CTIP) (Mycoplasma pulmonis) protein is Large ribosomal subunit protein uL14.